The following is a 63-amino-acid chain: Small ribosomal subunit protein eS31 (63 aa).

Residues C34, C37, C53, and C56 each coordinate Zn(2+). The C4-type zinc-finger motif lies at 34–56 (CPKCGSVMAFHREPVPRWHCGKC).

Belongs to the eukaryotic ribosomal protein eS31 family. Part of the 30S ribosomal subunit. It depends on Zn(2+) as a cofactor.

In Pyrobaculum neutrophilum (strain DSM 2338 / JCM 9278 / NBRC 100436 / V24Sta) (Thermoproteus neutrophilus), this protein is Small ribosomal subunit protein eS31.